We begin with the raw amino-acid sequence, 1095 residues long: MIDEKMRSKSIGPFVRQVKPLSPHMVLFVLLYVLSISVFFLTVSEAVCNLQDRDSLLWFSGNVSSPVSPLHWNSSIDCCSWEGISCDKSPENRVTSIILSSRGLSGNLPSSVLDLQRLSRLDLSHNRLSGPLPPGFLSALDQLLVLDLSYNSFKGELPLQQSFGNGSNGIFPIQTVDLSSNLLEGEILSSSVFLQGAFNLTSFNVSNNSFTGSIPSFMCTASPQLTKLDFSYNDFSGDLSQELSRCSRLSVLRAGFNNLSGEIPKEIYNLPELEQLFLPVNRLSGKIDNGITRLTKLTLLELYSNHIEGEIPKDIGKLSKLSSLQLHVNNLMGSIPVSLANCTKLVKLNLRVNQLGGTLSAIDFSRFQSLSILDLGNNSFTGEFPSTVYSCKMMTAMRFAGNKLTGQISPQVLELESLSFFTFSDNKMTNLTGALSILQGCKKLSTLIMAKNFYDETVPSNKDFLRSDGFPSLQIFGIGACRLTGEIPAWLIKLQRVEVMDLSMNRFVGTIPGWLGTLPDLFYLDLSDNFLTGELPKELFQLRALMSQKAYDATERNYLELPVFVNPNNVTTNQQYNQLSSLPPTIYIKRNNLTGTIPVEVGQLKVLHILELLGNNFSGSIPDELSNLTNLERLDLSNNNLSGRIPWSLTGLHFLSYFNVANNTLSGPIPTGTQFDTFPKANFEGNPLLCGGVLLTSCDPTQHSTTKMGKGKVNRTLVLGLVLGLFFGVSLILVLLALLVLSKRRVNPGDSENAELEINSNGSYSEVPPGSDKDISLVLLFGNSRYEVKDLTIFELLKATDNFSQANIIGCGGFGLVYKATLDNGTKLAVKKLTGDYGMMEKEFKAEVEVLSRAKHENLVALQGYCVHDSARILIYSFMENGSLDYWLHENPEGPAQLDWPKRLNIMRGASSGLAYMHQICEPHIVHRDIKSSNILLDGNFKAYVADFGLSRLILPYRTHVTTELVGTLGYIPPEYGQAWVATLRGDVYSFGVVMLELLTGKRPMEVFRPKMSRELVAWVHTMKRDGKPEEVFDTLLRESGNEEAMLRVLDIACMCVNQNPMKRPNIQQVVDWLKNIEAEKNQNNREEPEEEEET.

Residues Pro-23 to Val-43 traverse the membrane as a helical segment. Residues Asn-62 and Asn-73 are each glycosylated (N-linked (GlcNAc...) asparagine). 19 LRR repeats span residues Glu-91–Leu-115, Gln-116–Ala-139, Asp-141–Asn-165, Ile-170–Gln-195, Ala-197–Ala-221, Pro-223–Cys-246, Ser-247–Leu-270, Pro-271–Leu-294, Thr-295–Leu-318, Lys-320–Cys-342, Lys-344–Arg-366, Phe-367–Cys-391, Met-393–Leu-415, Glu-416–Gln-439, Cys-441–Arg-466, Phe-470–Leu-494, Gln-495–Thr-517, Leu-518–Leu-542, and Asn-566–Lys-589. Asn-165 carries N-linked (GlcNAc...) asparagine glycosylation. 3 N-linked (GlcNAc...) asparagine glycosylation sites follow: Asn-199, Asn-204, and Asn-207. An N-linked (GlcNAc...) asparagine glycan is attached at Asn-258. The N-linked (GlcNAc...) asparagine glycan is linked to Asn-341. The N-linked (GlcNAc...) asparagine glycan is linked to Asn-377. Asn-430 is a glycosylation site (N-linked (GlcNAc...) asparagine). 7 N-linked (GlcNAc...) asparagine glycosylation sites follow: Asn-569, Asn-592, Asn-616, Asn-627, Asn-640, Asn-662, and Asn-714. LRR repeat units follow at residues Leu-604 to Leu-628, Thr-629 to Leu-652, and Phe-654 to Thr-677. Residues Leu-721–Leu-741 form a helical membrane-spanning segment. A phosphothreonine mark is found at Thr-792 and Thr-800. A Protein kinase domain is found at Phe-803–Leu-1074. ATP-binding positions include Ile-809–Val-817 and Lys-831. Phosphotyrosine occurs at positions 876 and 916. Asp-929 functions as the Proton acceptor in the catalytic mechanism. Tyr-971 is subject to Phosphotyrosine.

This sequence belongs to the protein kinase superfamily. Ser/Thr protein kinase family. In terms of assembly, homo- and heterodimers with PSKR1. Interacts (via C-terminus) with AHA1 and AHA2 (via the R-domain). Autophosphorylated. As to expression, expressed ubiquitously, including in the shoot apical meristem and in the elongation zone of the root meristem.

It is found in the cell membrane. The enzyme catalyses L-seryl-[protein] + ATP = O-phospho-L-seryl-[protein] + ADP + H(+). The catalysed reaction is L-threonyl-[protein] + ATP = O-phospho-L-threonyl-[protein] + ADP + H(+). In terms of biological role, tyrosine-sulfated glycopeptide receptor with a serine/threonine-protein kinase activity. Regulates, in response to tyrosine-sulfated glycopeptide binding, a signaling cascade involved in cellular proliferation and plant growth. Not involved in PSK perception. Involved in plant immunity, with antagonistic effects on bacterial and fungal resistances. Mediates activation of the plasma membrane H(+)-ATPase by PSY1. Phosphorylates AHA2 at Thr-881. In Arabidopsis thaliana (Mouse-ear cress), this protein is Tyrosine-sulfated glycopeptide receptor 1.